A 686-amino-acid chain; its full sequence is Gamma-aminobutyric acid receptor alpha-like (686 aa).

The signal sequence occupies residues 1-58; sequence MCTMPATRDASGSGDASTDLIAARSLSSHQGQRSNLRIFKLLISCCLLMLCIYPNAWP. Residues 97 to 393 lie on the Extracellular side of the membrane; the sequence is SSWLTQSNNH…NFHLQRHMGN (297 aa). N-linked (GlcNAc...) asparagine glycosylation occurs at Asn-108. An intrachain disulfide couples Cys-233 to Cys-247. Asn-292 is a glycosylation site (N-linked (GlcNAc...) asparagine). 3 helical membrane passes run 394–414, 424–441, and 456–476; these read FLIQ…VSFW, VSLG…GLEA, and FFVF…AVVH. The Cytoplasmic segment spans residues 477–650; the sequence is YYTKYGSGEC…YNSVSKIDRA (174 aa). The segment at 570 to 641 is disordered; that stretch reads KPPRADSDED…RRKGKRTPQY (72 aa). Polar residues predominate over residues 586-596; sequence QLRANEAPTTS. Residues 597-609 show a composition bias toward low complexity; that stretch reads AAAAAAQAAAQAA. Residues 651–671 traverse the membrane as a helical segment; sequence SRIVFPLLFILINVFYWYGYL.

Belongs to the ligand-gated ion channel (TC 1.A.9) family. Gamma-aminobutyric acid receptor (TC 1.A.9.5) subfamily. In terms of assembly, generally pentameric. There are five types of GABA(A) receptor chains: alpha, beta, gamma, delta, and rho. Interacts with Lcch3 (beta chain).

It localises to the postsynaptic cell membrane. The protein localises to the cell membrane. Its function is as follows. GABA, an inhibitory neurotransmitter, mediates neuronal inhibition by binding to the GABA receptor and opening an integral chloride channel. May combine with the ligand-gated ion channel subunit Lcch3 to form cation-selective GABA-gated ion channels. This chain is Gamma-aminobutyric acid receptor alpha-like (Grd), found in Drosophila melanogaster (Fruit fly).